Reading from the N-terminus, the 216-residue chain is MSLPMLQVALDNQTMDSAYETTRLIAEEVDIIEVGTILCVGEGVRAVRDLKALYPHKIVLADAKIADAGKILSRMCFEANADWVTVICCADINTAKGALDVAKEFNGDVQIELTGYWTWEQAQQWRDAGIQQVVYHRSRDAQAAGVAWGEADITAIKRLSDMGFKVTVTGGLALEDLPLFKGIPIHVFIAGRSIRDAASPVEAARQFKRSIAELWG.

Asp-11 is a substrate binding site. Mg(2+) contacts are provided by Glu-33 and Asp-62. Substrate is bound at residue Arg-192.

This sequence belongs to the HPS/KGPDC family. KGPDC subfamily. In terms of assembly, homodimer. Mg(2+) is required as a cofactor.

The catalysed reaction is 3-dehydro-L-gulonate 6-phosphate + H(+) = L-xylulose 5-phosphate + CO2. The protein operates within cofactor degradation; L-ascorbate degradation; D-xylulose 5-phosphate from L-ascorbate: step 2/4. Its function is as follows. Catalyzes the decarboxylation of 3-keto-L-gulonate-6-P into L-xylulose-5-P. Is involved in the anaerobic L-ascorbate utilization. This chain is 3-keto-L-gulonate-6-phosphate decarboxylase UlaD, found in Escherichia coli O139:H28 (strain E24377A / ETEC).